A 790-amino-acid chain; its full sequence is Tumor necrosis factor alpha-induced protein 3 (790 aa).

N-acetylalanine is present on alanine 2. A TRAF-binding region spans residues proline 58–glutamate 300. Residues leucine 92–leucine 263 form the OTU domain. Residue aspartate 100 is part of the active site. Cysteine 103 (nucleophile) is an active-site residue. Interaction with ubiquitin regions lie at residues leucine 157–tyrosine 159, serine 190–glutamate 192, and phenylalanine 224–leucine 227. Residue histidine 256 is the Proton acceptor of the active site. Residues glutamine 357–histidine 368 are compositionally biased toward basic and acidic residues. Positions glutamine 357–valine 377 are disordered. The interval alanine 369–cysteine 775 is interaction with TNIP1. An A20-type 1 zinc finger spans residues serine 381–asparagine 416. The segment at lysine 386–serine 453 is interaction with RIPK1. The Zn(2+) site is built by cysteine 387, cysteine 392, cysteine 404, and cysteine 407. Disordered stretches follow at residues glutamine 415 to alanine 434 and alanine 447 to phenylalanine 468. Serine 459 carries the post-translational modification Phosphoserine. A20-type zinc fingers lie at residues glutamate 472–serine 507 and histidine 515–serine 548. Zn(2+) contacts are provided by cysteine 478, cysteine 483, cysteine 495, cysteine 498, cysteine 521, cysteine 524, cysteine 536, and cysteine 539. The disordered stretch occupies residues serine 550 to glycine 583. Serine 575 bears the Phosphoserine mark. Residues arginine 601–histidine 636 form an A20-type 4 zinc finger. A required for proteasomal degradation of UBE2N and UBE2D3, TRAF6 deubiquitination, and TAX1BP1 interaction with UBE2N region spans residues serine 605–isoleucine 655. Residues lysine 606–glycine 790 form a sufficient for inhibitory activity of TNF-induced NF-kappa-B activity region. Zn(2+) is bound by residues cysteine 607, cysteine 612, cysteine 624, and cysteine 627. Serine 645 is subject to Phosphoserine. Residues phenylalanine 651–phenylalanine 686 form an A20-type 5 zinc finger. Zn(2+) contacts are provided by cysteine 657, cysteine 662, cysteine 674, and cysteine 677. The segment covering alanine 689–proline 705 has biased composition (basic and acidic residues). A disordered region spans residues alanine 689–serine 712. Residues arginine 697–glycine 790 are required for lysosomal localization and for TRAF2 lysosomal degradation. 2 A20-type zinc fingers span residues serine 710 to proline 745 and aspartate 756 to glycine 790. 8 residues coordinate Zn(2+): cysteine 716, cysteine 721, cysteine 733, cysteine 736, cysteine 762, cysteine 767, cysteine 779, and cysteine 782.

Belongs to the peptidase C64 family. In terms of assembly, homodimer. Interacts with TNIP1, TAX1BP1 and TRAF2. Interacts with RNF11, ITCH and TAX1BP1 only after TNF stimulation; these interaction are transient and they are lost after 1 hour of stimulation with TNF. Interacts with YWHAZ and YWHAH. Interacts with IKBKG; the interaction is induced by TNF stimulation and by polyubiquitin. Interacts with RIPK1. Interacts with UBE2N; the interaction requires TAX1BP1. Interacts with TRAF6; the interaction is inhibited by HTLV-1 protein Tax. Post-translationally, proteolytically cleaved by MALT1 upon TCR stimulation; disrupts NF-kappa-B inhibitory function and results in increased IL-2 production. It is proposed that only a fraction of TNFAIP3 colocalized with TCR and CBM complex is cleaved, leaving the main TNFAIP3 pool intact.

It localises to the cytoplasm. Its subcellular location is the nucleus. The protein resides in the lysosome. It catalyses the reaction Thiol-dependent hydrolysis of ester, thioester, amide, peptide and isopeptide bonds formed by the C-terminal Gly of ubiquitin (a 76-residue protein attached to proteins as an intracellular targeting signal).. Ubiquitin-editing enzyme that contains both ubiquitin ligase and deubiquitinase activities. Involved in immune and inflammatory responses signaled by cytokines, such as TNF-alpha and IL-1 beta, or pathogens via Toll-like receptors (TLRs) through terminating NF-kappa-B activity. Essential component of a ubiquitin-editing protein complex, comprising also RNF11, ITCH and TAX1BP1, that ensures the transient nature of inflammatory signaling pathways. In cooperation with TAX1BP1 promotes disassembly of E2-E3 ubiquitin protein ligase complexes in IL-1R and TNFR-1 pathways; affected are at least E3 ligases TRAF6, TRAF2 and BIRC2, and E2 ubiquitin-conjugating enzymes UBE2N and UBE2D3. In cooperation with TAX1BP1 promotes ubiquitination of UBE2N and proteasomal degradation of UBE2N and UBE2D3. Upon TNF stimulation, deubiquitinates 'Lys-63'-polyubiquitin chains on RIPK1 and catalyzes the formation of 'Lys-48'-polyubiquitin chains. This leads to RIPK1 proteasomal degradation and consequently termination of the TNF- or LPS-mediated activation of NF-kappa-B. Deubiquitinates TRAF6 probably acting on 'Lys-63'-linked polyubiquitin. Upon T-cell receptor (TCR)-mediated T-cell activation, deubiquitinates 'Lys-63'-polyubiquitin chains on MALT1 thereby mediating disassociation of the CBM (CARD11:BCL10:MALT1) and IKK complexes and preventing sustained IKK activation. Deubiquitinates NEMO/IKBKG; the function is facilitated by TNIP1 and leads to inhibition of NF-kappa-B activation. Upon stimulation by bacterial peptidoglycans, probably deubiquitinates RIPK2. Can also inhibit I-kappa-B-kinase (IKK) through a non-catalytic mechanism which involves polyubiquitin; polyubiquitin promotes association with IKBKG and prevents IKK MAP3K7-mediated phosphorylation. Targets TRAF2 for lysosomal degradation. In vitro able to deubiquitinate 'Lys-11'-, 'Lys-48'- and 'Lys-63' polyubiquitin chains. Inhibitor of programmed cell death. Has a role in the function of the lymphoid system. Required for LPS-induced production of pro-inflammatory cytokines and IFN beta in LPS-tolerized macrophages. This chain is Tumor necrosis factor alpha-induced protein 3 (TNFAIP3), found in Homo sapiens (Human).